The chain runs to 967 residues: Sodium/potassium exporting P-type ATPase 1 (967 aa).

Residues 1 to 70 (MEGSGDKRHE…GVNPWKILLR (70 aa)) are Cytoplasmic-facing. The helical transmembrane segment at 71-91 (QVSNGLTAVLVVAMVVSFAVK) threads the bilayer. Asp92 is a topological domain (extracellular). Residues 93-113 (YAEAGVLVIVIAFNTIVGFVQ) form a helical membrane-spanning segment. Over 114 to 254 (EYRAEKTMDA…TQSTPMQRKL (141 aa)) the chain is Cytoplasmic. Residues 255-275 (NLMAYMLLAFALLLALIVFAV) form a helical membrane-spanning segment. Topologically, residues 276 to 283 (NKFNFSTE) are extracellular. Asn279 is a glycosylation site (N-linked (GlcNAc...) asparagine). A helical membrane pass occupies residues 284–304 (VVIYAIALSIAIIPEGLIAVI). The Cytoplasmic segment spans residues 305–732 (TIVQALGVRR…GRRIFSNIKK (428 aa)). Asp340 functions as the 4-aspartylphosphate intermediate in the catalytic mechanism. 2 residues coordinate Mg(2+): Asp340 and Thr342. Residues Thr342, Glu425, Lys478, Arg523, Thr587, Gly588, Asp589, Arg651, and Lys657 each coordinate ATP. Position 676 (Asp676) interacts with Mg(2+). Asn679 contacts ATP. The helical transmembrane segment at 733–753 (FVLHLLSTNVGQVIVLLIGLA) threads the bilayer. Residues 754 to 812 (FKDRTGTSVFPLSPVQILFLNLVTGTPPAMALGIEPASSSVMQVPPHVKGLFTVELIMD) are Extracellular-facing. Residues 813–833 (IFIFGTFIGILALASWVLVIY) form a helical membrane-spanning segment. Residues 834–900 (PFGNSDLATL…GGASRFFSNK (67 aa)) are Cytoplasmic-facing. Residues 901 to 921 (VLVASVFIGALLPIPTIYIGT) traverse the membrane as a helical segment. Residues 922–931 (LNTEVFKQEG) lie on the Extracellular side of the membrane. Residues 932–952 (ITWEWIIVIVSVFVFFLLSEF) form a helical membrane-spanning segment. Topologically, residues 953–967 (YKLLKRRFIKTPYNM) are cytoplasmic.

Belongs to the cation transport ATPase (P-type) (TC 3.A.3) family. Type IID subfamily. Mg(2+) serves as cofactor. In terms of processing, the active site is phosphorylated in presence of sodium or potassium and in conditions of higher pH. Not phosphorylated in presence of calcium ions.

The protein localises to the cell membrane. It catalyses the reaction Na(+)(in) + ATP + H2O = Na(+)(out) + ADP + phosphate + H(+). The enzyme catalyses K(+)(in) + ATP + H2O = K(+)(out) + ADP + phosphate + H(+). Functionally, catalyzes the hydrolysis of ATP coupled with the export of sodium and potassium from the cell. May pump potassium inefficiently. May transport other cations such as lithium. Sodium/potassium efflux ATPases are involved in salt tolerance and maintaining the membrane potential across the plasma membrane in high salinity (Na+) or alkaline (K+) environments. This is Sodium/potassium exporting P-type ATPase 1 from Physcomitrium patens (Spreading-leaved earth moss).